The sequence spans 550 residues: Integral membrane protein DGCR2/IDD (550 aa).

A signal peptide spans 1-20 (MVPKADSGAFLLLFLLVLTV). The Extracellular segment spans residues 21 to 349 (TEPLRPELRC…LFDSMASGMR (329 aa)). Positions 28 to 68 (LRCNPGQFACRSGTIQCIPLPWQCDGWATCEDESDEANCPE) constitute an LDL-receptor class A domain. 3 disulfides stabilise this stretch: C30-C44, C37-C57, and C51-C66. A disordered region spans residues 69–92 (VTGEVRPHHGKEAVDPRQGRARGG). Over residues 71-92 (GEVRPHHGKEAVDPRQGRARGG) the composition is skewed to basic and acidic residues. The 127-residue stretch at 115 to 241 (CPTGWHHYEG…FCAQLQCFHF (127 aa)) folds into the C-type lectin domain. 2 disulfides stabilise this stretch: C145-C265 and C233-C257. N149 and N196 each carry an N-linked (GlcNAc...) asparagine glycan. Residues 270 to 333 (TCVDIKDNVV…PKECCKFMCL (64 aa)) form the VWFC domain. The chain crosses the membrane as a helical span at residues 350 to 368 (LVVSCISSFLILSLLLFMV). Topologically, residues 369-550 (HRLRQRRRER…HSRSSLNTVV (182 aa)) are cytoplasmic. S381 is modified (phosphoserine). Residues 500 to 550 (AGASLADLEDSADSSSALLVPPDPAQSGSTPAAEALPGGGRHSRSSLNTVV) form a disordered region.

Predominantly expressed in brain, heart, lung and fetal kidney. Low levels in liver and adult kidney.

It is found in the membrane. In terms of biological role, putative adhesion receptor, that could be involved in cell-cell or cell-matrix interactions required for normal cell differentiation and migration. The chain is Integral membrane protein DGCR2/IDD (DGCR2) from Homo sapiens (Human).